A 358-amino-acid polypeptide reads, in one-letter code: Ethanol acetyltransferase 1 (358 aa).

Residues 59-166 (PIVFIHGLFG…NAPINQPHIS (108 aa)) form the AB hydrolase-1 domain. Residues S132, D156, and H305 each act as charge relay system in the active site.

It belongs to the AB hydrolase superfamily.

The protein localises to the mitochondrion. It catalyses the reaction ethanol + acetyl-CoA = ethyl acetate + CoA. The enzyme catalyses acetyl-CoA + H2O = acetate + CoA + H(+). The catalysed reaction is ethyl acetate + H2O = ethanol + acetate + H(+). Functionally, alcohol acetyltransferase that catalyzes the synthesis of ethyl acetate from ethanol and acetyl-CoA. Can also function as a thioesterase by hydrolyzing acetyl-CoA in the absence of ethanol, as well as esterase hydrolyzing ethyl acetate. In Eremothecium cymbalariae (strain CBS 270.75 / DBVPG 7215 / KCTC 17166 / NRRL Y-17582) (Yeast), this protein is Ethanol acetyltransferase 1 (EAT1).